A 236-amino-acid polypeptide reads, in one-letter code: Large ribosomal subunit protein uL3 (236 aa).

The segment at 139 to 163 is disordered; it reads ARDSSTTHEHHRHVGAIGQRKTPGK.

This sequence belongs to the universal ribosomal protein uL3 family. Part of the 50S ribosomal subunit. Forms a cluster with proteins L14 and L19.

Functionally, one of the primary rRNA binding proteins, it binds directly near the 3'-end of the 23S rRNA, where it nucleates assembly of the 50S subunit. In Anaeromyxobacter sp. (strain Fw109-5), this protein is Large ribosomal subunit protein uL3.